The sequence spans 521 residues: Probable tRNA (uracil-O(2)-)-methyltransferase (521 aa).

Belongs to the TRM44 family.

The protein resides in the cytoplasm. It carries out the reaction uridine(44) in tRNA(Ser) + S-adenosyl-L-methionine = 2'-O-methyluridine(44) in tRNA(Ser) + S-adenosyl-L-homocysteine + H(+). In terms of biological role, probable adenosyl-L-methionine (AdoMet)-dependent tRNA (uracil-O(2)-)-methyltransferase. The chain is Probable tRNA (uracil-O(2)-)-methyltransferase (trmt44) from Drosophila melanogaster (Fruit fly).